Consider the following 286-residue polypeptide: uncharacterized protein (286 aa).

The NADP(+) site is built by I54, N128, and K162. The active-site Proton donor is S178. NADP(+) contacts are provided by Y192, K196, I225, and T227. Y192 functions as the Proton acceptor in the catalytic mechanism. The active-site Lowers pKa of active site Tyr is the K196.

Belongs to the short-chain dehydrogenases/reductases (SDR) family.

This is an uncharacterized protein from Schizosaccharomyces pombe (strain 972 / ATCC 24843) (Fission yeast).